The chain runs to 79 residues: D-alanyl carrier protein (79 aa).

Residues 1–77 (MDTKQGVLDI…KIVAKVESLE (77 aa)) form the Carrier domain. At Ser35 the chain carries O-(pantetheine 4'-phosphoryl)serine.

The protein belongs to the DltC family. Post-translationally, 4'-phosphopantetheine is transferred from CoA to a specific serine of apo-DCP.

It is found in the cytoplasm. It functions in the pathway cell wall biogenesis; lipoteichoic acid biosynthesis. In terms of biological role, carrier protein involved in the D-alanylation of lipoteichoic acid (LTA). The loading of thioester-linked D-alanine onto DltC is catalyzed by D-alanine--D-alanyl carrier protein ligase DltA. The DltC-carried D-alanyl group is further transferred to cell membrane phosphatidylglycerol (PG) by forming an ester bond, probably catalyzed by DltD. D-alanylation of LTA plays an important role in modulating the properties of the cell wall in Gram-positive bacteria, influencing the net charge of the cell wall. This is D-alanyl carrier protein from Lactobacillus helveticus (strain DPC 4571).